The sequence spans 191 residues: Fe/S biogenesis protein NfuA (191 aa).

[4Fe-4S] cluster contacts are provided by C149 and C152.

It belongs to the NfuA family. As to quaternary structure, homodimer. It depends on [4Fe-4S] cluster as a cofactor.

In terms of biological role, involved in iron-sulfur cluster biogenesis. Binds a 4Fe-4S cluster, can transfer this cluster to apoproteins, and thereby intervenes in the maturation of Fe/S proteins. Could also act as a scaffold/chaperone for damaged Fe/S proteins. This chain is Fe/S biogenesis protein NfuA, found in Salmonella choleraesuis (strain SC-B67).